The chain runs to 171 residues: Adenine phosphoribosyltransferase (171 aa).

Belongs to the purine/pyrimidine phosphoribosyltransferase family. Homodimer.

Its subcellular location is the cytoplasm. The enzyme catalyses AMP + diphosphate = 5-phospho-alpha-D-ribose 1-diphosphate + adenine. The protein operates within purine metabolism; AMP biosynthesis via salvage pathway; AMP from adenine: step 1/1. Its function is as follows. Catalyzes a salvage reaction resulting in the formation of AMP, that is energically less costly than de novo synthesis. In Mycoplasmopsis fermentans (strain ATCC 19989 / NBRC 14854 / NCTC 10117 / PG18) (Mycoplasma fermentans), this protein is Adenine phosphoribosyltransferase.